The following is a 74-amino-acid chain: Brevinin-2MT1 (74 aa).

Positions 1 to 22 (MFTMKKSLLVLFFLGTISLSLC) are cleaved as a signal peptide. The propeptide at 23 to 39 (EEERNADEDDGEMTEEE) is removed in mature form. The cysteines at positions 68 and 74 are disulfide-linked.

This sequence belongs to the frog skin active peptide (FSAP) family. Brevinin subfamily. As to expression, expressed by the skin glands.

It is found in the secreted. In terms of biological role, antimicrobial peptide. Active against a variety of Gram-negative and Gram-positive bacterial strains. Active against fungi. Shows hemolytic activity against human erythrocytes. The sequence is that of Brevinin-2MT1 from Amolops mantzorum (Sichuan torrent frog).